The chain runs to 123 residues: MKRLYNFLSSYEKRKLRNRAKLDKSAGRLRISIFKSNKHFYVQLINDAKGTTLASASTLDDKIRNVCKGRVNAETIKQVSSLLIERLPSTKLQQRFVFDRGAYKYTGLISQFAEALRSSGFKF.

The protein belongs to the universal ribosomal protein uL18 family. As to quaternary structure, part of the 50S ribosomal subunit; part of the 5S rRNA/L5/L18/L25 subcomplex. Contacts the 5S and 23S rRNAs.

Its function is as follows. This is one of the proteins that bind and probably mediate the attachment of the 5S RNA into the large ribosomal subunit, where it forms part of the central protuberance. The chain is Large ribosomal subunit protein uL18 from Wolbachia pipientis subsp. Culex pipiens (strain wPip).